The sequence spans 205 residues: Large ribosomal subunit protein uL4 (205 aa).

The disordered stretch occupies residues R43–D77. The segment covering K63 to A73 has biased composition (basic residues).

It belongs to the universal ribosomal protein uL4 family. As to quaternary structure, part of the 50S ribosomal subunit.

In terms of biological role, one of the primary rRNA binding proteins, this protein initially binds near the 5'-end of the 23S rRNA. It is important during the early stages of 50S assembly. It makes multiple contacts with different domains of the 23S rRNA in the assembled 50S subunit and ribosome. Its function is as follows. Forms part of the polypeptide exit tunnel. This chain is Large ribosomal subunit protein uL4, found in Desulfosudis oleivorans (strain DSM 6200 / JCM 39069 / Hxd3) (Desulfococcus oleovorans).